The primary structure comprises 109 residues: UPF0060 membrane protein PA14_21660 (109 aa).

4 consecutive transmembrane segments (helical) span residues 5–25 (LWFV…YLWL), 27–47 (LGKS…FALL), 59–79 (AYAA…AFVE), and 84–104 (LWSD…VLFG).

The protein belongs to the UPF0060 family.

It is found in the cell inner membrane. This chain is UPF0060 membrane protein PA14_21660, found in Pseudomonas aeruginosa (strain UCBPP-PA14).